Reading from the N-terminus, the 200-residue chain is Pyridoxal 5'-phosphate synthase subunit PdxT (200 aa).

52 to 54 (GES) contributes to the L-glutamine binding site. The active-site Nucleophile is the Cys84. Residues Arg116 and 145-146 (IR) each bind L-glutamine. Catalysis depends on charge relay system residues His181 and Glu183.

The protein belongs to the glutaminase PdxT/SNO family. In the presence of PdxS, forms a dodecamer of heterodimers. Only shows activity in the heterodimer.

It carries out the reaction aldehydo-D-ribose 5-phosphate + D-glyceraldehyde 3-phosphate + L-glutamine = pyridoxal 5'-phosphate + L-glutamate + phosphate + 3 H2O + H(+). The catalysed reaction is L-glutamine + H2O = L-glutamate + NH4(+). Its pathway is cofactor biosynthesis; pyridoxal 5'-phosphate biosynthesis. In terms of biological role, catalyzes the hydrolysis of glutamine to glutamate and ammonia as part of the biosynthesis of pyridoxal 5'-phosphate. The resulting ammonia molecule is channeled to the active site of PdxS. The polypeptide is Pyridoxal 5'-phosphate synthase subunit PdxT (Saccharolobus islandicus (strain Y.G.57.14 / Yellowstone #1) (Sulfolobus islandicus)).